The primary structure comprises 128 residues: Cholecystokinin B (128 aa).

Residues 1-20 form the signal peptide; it reads MCSGVCICLLLAMLSASSKA. The propeptide occupies 21 to 108; that stretch reads HQATGSLGED…FDQSHRINDR (88 aa). The interval 47-67 is disordered; the sequence is YARASSAGQKKSFQRTDGDQR. Sulfotyrosine is present on Y110. The residue at position 116 (F116) is a Phenylalanine amide. The propeptide occupies 120–128; sequence SAEEYEYSS.

The protein belongs to the gastrin/cholecystokinin family. In terms of processing, the precursor is cleaved by proteases to produce a number of active cholecystokinins. Brain and gastrointestinal tract.

It localises to the secreted. This is Cholecystokinin B (cck-b) from Xenopus laevis (African clawed frog).